We begin with the raw amino-acid sequence, 311 residues long: Malate dehydrogenase (311 aa).

NAD(+) is bound by residues 7-13 and Asp34; that span reads GAAGGIG. Residues Arg81 and Arg87 each contribute to the substrate site. NAD(+)-binding positions include Asn94 and 117-119; that span reads ITN. The substrate site is built by Asn119 and Arg153. His177 acts as the Proton acceptor in catalysis. An NAD(+)-binding site is contributed by Met227.

Belongs to the LDH/MDH superfamily. MDH type 1 family. As to quaternary structure, homodimer.

It carries out the reaction (S)-malate + NAD(+) = oxaloacetate + NADH + H(+). Catalyzes the reversible oxidation of malate to oxaloacetate. In Colwellia psychrerythraea (strain 34H / ATCC BAA-681) (Vibrio psychroerythus), this protein is Malate dehydrogenase.